The chain runs to 221 residues: Putative 3-methyladenine DNA glycosylase (221 aa).

This sequence belongs to the DNA glycosylase MPG family.

This chain is Putative 3-methyladenine DNA glycosylase, found in Herpetosiphon aurantiacus (strain ATCC 23779 / DSM 785 / 114-95).